The primary structure comprises 78 residues: UPF0401 protein YubL (78 aa).

The protein belongs to the UPF0401 family.

In Salmonella typhi, this protein is UPF0401 protein YubL (yubL).